The primary structure comprises 239 residues: Serine protease SplF (239 aa).

The first 36 residues, 1-36 (MNKNIIIKSIAALTILTSVTGVGTTMVEGIQQTAKA), serve as a signal peptide directing secretion. Catalysis depends on charge relay system residues histidine 75, aspartate 114, and serine 192.

The protein belongs to the peptidase S1B family.

The protein resides in the secreted. The sequence is that of Serine protease SplF (splF) from Staphylococcus aureus (strain Mu50 / ATCC 700699).